We begin with the raw amino-acid sequence, 743 residues long: Catalase-peroxidase (743 aa).

The segment covering 1–15 (MSSDSRPPQPDTSTQ) has biased composition (polar residues). Positions 1-40 (MSSDSRPPQPDTSTQSNSESESPAISSPTPQDHAPMTNRD) are disordered. The segment covering 16–28 (SNSESESPAISSP) has biased composition (low complexity). The tryptophyl-tyrosyl-methioninium (Trp-Tyr) (with M-259) cross-link spans 110-233 (WHAAGTYRIQ…YGATTMGLIY (124 aa)). His111 (proton acceptor) is an active-site residue. The segment at residues 233–259 (YVNPEGPEGKPDPVAAAHDIRETFARM) is a cross-link (tryptophyl-tyrosyl-methioninium (Tyr-Met) (with W-110)). Heme b is bound at residue His274. Residues 490–511 (DKRGGANGGRLRLEPQKSWESN) are disordered.

It belongs to the peroxidase family. Peroxidase/catalase subfamily. As to quaternary structure, homodimer or homotetramer. It depends on heme b as a cofactor. In terms of processing, formation of the three residue Trp-Tyr-Met cross-link is important for the catalase, but not the peroxidase activity of the enzyme.

The catalysed reaction is H2O2 + AH2 = A + 2 H2O. It carries out the reaction 2 H2O2 = O2 + 2 H2O. Its function is as follows. Bifunctional enzyme with both catalase and broad-spectrum peroxidase activity. This Mycobacterium ulcerans (strain Agy99) protein is Catalase-peroxidase.